Reading from the N-terminus, the 358-residue chain is Methionine aminopeptidase 2 (358 aa).

His-109 contributes to the substrate binding site. Residues Asp-130, Asp-141, and His-210 each contribute to the a divalent metal cation site. Position 218 (His-218) interacts with substrate. A divalent metal cation-binding residues include Glu-243 and Glu-339.

The protein belongs to the peptidase M24A family. Methionine aminopeptidase eukaryotic type 2 subfamily. Requires Co(2+) as cofactor. The cofactor is Zn(2+). Mn(2+) serves as cofactor. Fe(2+) is required as a cofactor.

It is found in the cytoplasm. It catalyses the reaction Release of N-terminal amino acids, preferentially methionine, from peptides and arylamides.. Irreversibly inhibited by the fungal metabolite fumagillin and the fumagillin analog TNP470, antiangiogenic drugs. Cotranslationally removes the N-terminal methionine from nascent proteins. The N-terminal methionine is often cleaved when the second residue in the primary sequence is small and uncharged (Met-Ala-, Cys, Gly, Pro, Ser, Thr, or Val). The polypeptide is Methionine aminopeptidase 2 (Encephalitozoon hellem (strain ATCC 50504) (Microsporidian parasite)).